The following is a 256-amino-acid chain: Phosphonates import ATP-binding protein PhnC (256 aa).

The 249-residue stretch at Leu5 to Ser253 folds into the ABC transporter domain. Residue Gly38–Ser45 participates in ATP binding.

This sequence belongs to the ABC transporter superfamily. Phosphonates importer (TC 3.A.1.9.1) family. The complex is composed of two ATP-binding proteins (PhnC), two transmembrane proteins (PhnE) and a solute-binding protein (PhnD).

The protein resides in the cell inner membrane. It carries out the reaction phosphonate(out) + ATP + H2O = phosphonate(in) + ADP + phosphate + H(+). In terms of biological role, part of the ABC transporter complex PhnCDE involved in phosphonates import. Responsible for energy coupling to the transport system. This Bordetella parapertussis (strain 12822 / ATCC BAA-587 / NCTC 13253) protein is Phosphonates import ATP-binding protein PhnC.